Reading from the N-terminus, the 606-residue chain is Phosphogluconate dehydratase (606 aa).

The [4Fe-4S] cluster site is built by Cys156 and Cys223.

This sequence belongs to the IlvD/Edd family. [4Fe-4S] cluster is required as a cofactor.

It catalyses the reaction 6-phospho-D-gluconate = 2-dehydro-3-deoxy-6-phospho-D-gluconate + H2O. It participates in carbohydrate metabolism; Entner-Doudoroff pathway. In terms of biological role, catalyzes the dehydration of 6-phospho-D-gluconate to 2-dehydro-3-deoxy-6-phospho-D-gluconate. This chain is Phosphogluconate dehydratase, found in Rhizobium meliloti (strain 1021) (Ensifer meliloti).